A 340-amino-acid chain; its full sequence is Putative phosphatidylcholine:ceramide cholinephosphotransferase 3 (340 aa).

The disordered stretch occupies residues 1–25 (MGSVSKTVISARGASPDDEQNGTKN). 4 helical membrane-spanning segments follow: residues 36–56 (CIFL…VLAY), 81–101 (SSLG…LLVI), 178–198 (LLFS…AYYL), and 202–222 (IKPL…CMTI). His-183 is an active-site residue. Residues 223-340 (SRTHYTIDVV…SSSSTYPLPC (118 aa)) are Cytoplasmic-facing. Catalysis depends on residues His-226 and Asp-230. Residues 294–313 (STPRGQERGGASAESSDSSV) are disordered.

This sequence belongs to the sphingomyelin synthase family.

Its subcellular location is the membrane. The enzyme catalyses an N-acyl-sphingoid base + a 1,2-diacyl-sn-glycero-3-phosphocholine = an N-(acyl)-sphingosylphosphocholine + a 1,2-diacyl-sn-glycerol. It carries out the reaction an N-acylsphing-4-enine + a 1,2-diacyl-sn-glycero-3-phosphocholine = a sphingomyelin + a 1,2-diacyl-sn-glycerol. The catalysed reaction is an N-acyl-15-methylhexadecasphing-4-enine + a 1,2-diacyl-sn-glycero-3-phosphocholine = an N-acyl-15-methylhexadecasphing-4-enine-1-phosphocholine + a 1,2-diacyl-sn-glycerol. Its pathway is lipid metabolism; sphingolipid metabolism. Its function is as follows. Bidirectional lipid cholinephosphotransferase capable of converting phosphatidylcholine (PC) and ceramide to sphingomyelin (SM) and diacylglycerol (DAG) and vice versa. Direction is dependent on the relative concentrations of DAG and ceramide as phosphocholine acceptors. Directly and specifically recognizes the choline head group on the substrate. Also requires two fatty chains on the choline-P donor molecule in order to be recognized efficiently as a substrate. Does not function strictly as a SM synthase. C.elegans contains specific sphingoid bases, which are unique or different in structure compared to the sphingoid bases found in other animals. Two examples of these distinctive compounds are: 15-methylhexadecasphinganine and 15-methylhexadecasphing-4-enine. This chain is Putative phosphatidylcholine:ceramide cholinephosphotransferase 3 (sms-3), found in Caenorhabditis elegans.